The primary structure comprises 830 residues: MGRTQKKNSKGRLDRYYYLAKEKGYRARSSFKIIQINEKFGHFLEKSKVVIDLCAAPGSWCQVASNLCPVNSLIIGVDIVPMQPMPNVITFQSDITTEDCRSKLRGYMKTWKADTVLHDGAPNVGLNWVQDAFTQSHLTLQALKLAVENLVVGGTFVTKIFRSKDYNKLMWVFQQLFDKVEATKPPASRNVSAEIFVVCKGFKAPKKLDPRLLDPKEVFEELPDGPQNMQAKVYNPEKKTRKRDGYEEGDYLLYHTVPIMDFVKVEDPIQMLGTTNKFTLDKDDHEWKIVKKLKQTTPEFKACIEDLKVLGKKDFKMLLRWRKAARELLGLDKDEEQPEIETVPLTEEEQIEKELQEMQQKQNLKKKREKRKQNEIKQKEITRMQMQMITPTDLGIEAASIGRDSLFNLKTAEKTGILDDLARGKKRMVFTRDELAEDNEIQIDENAPLSDRDDLADADELESQLDAMYHQFKARRIERDAHFKAKEARGGDDDAWNGFDEVASDEEPEESKKDYVDDDDSDVSDSDSDEAINQLIAKIKGETGDKKLSAKARALFNDSIFDGVEADLPSEEPQAPASSEQGSKKRRLEEVSEESSSDEEEAEEESDSDFEIVRNEKDESDDDYDSEDEAERSQKEKHAREVDIATVEAMTLAHQLALGQRSKHDIVDEGFNRYSFRDRDNLPEWFLEDEKMHSKINKPITKEAAMAIKEKLKALNARPIKKVAEAKARKKMRALNRLEKLKKKAGLINDDSDKSEKDKAEEIAKLMKKVTKKAKLKPKVTLVVAKGKNRGLSGRPKGIKGKYKMVDGVMKNEQRALKRIAKKHRKKSKH.

S-adenosyl-L-methionine-binding residues include Gly58, Trp60, Asp78, Asp94, and Asp119. Lys159 (proton acceptor) is an active-site residue. Positions 345–388 (LTEEEQIEKELQEMQQKQNLKKKREKRKQNEIKQKEITRMQMQM) form a coiled coil. Disordered regions lie at residues 485 to 529 (AKEA…SDSD) and 565 to 642 (EADL…AREV). 3 stretches are compositionally biased toward acidic residues: residues 516-529 (VDDD…SDSD), 591-610 (VSEE…DSDF), and 618-630 (DESD…EDEA). Positions 631–642 (ERSQKEKHAREV) are enriched in basic and acidic residues.

Belongs to the class I-like SAM-binding methyltransferase superfamily. RNA methyltransferase RlmE family. SPB1 subfamily. As to quaternary structure, component of the nucleolar and nucleoplasmic pre-60S ribosomal particle.

It is found in the nucleus. It localises to the nucleolus. The catalysed reaction is a ribonucleotide in rRNA + S-adenosyl-L-methionine = a 2'-O-methylribonucleotide in rRNA + S-adenosyl-L-homocysteine + H(+). Functionally, required for proper assembly of pre-ribosomal particles during the biogenesis of the 60S ribosomal subunit. This Eremothecium gossypii (strain ATCC 10895 / CBS 109.51 / FGSC 9923 / NRRL Y-1056) (Yeast) protein is AdoMet-dependent rRNA methyltransferase SPB1.